The primary structure comprises 411 residues: Tyrosine--tRNA ligase (411 aa).

Position 34 (tyrosine 34) interacts with L-tyrosine. A 'HIGH' region motif is present at residues 39–48 (CTATSLHIGS). Positions 171 and 175 each coordinate L-tyrosine. Positions 231–235 (KMGKT) match the 'KMSKS' region motif. Lysine 234 is a binding site for ATP. Residues 345-411 (ITAFELFHEA…GKKRHILVKI (67 aa)) form the S4 RNA-binding domain.

Belongs to the class-I aminoacyl-tRNA synthetase family. TyrS type 1 subfamily. In terms of assembly, homodimer.

Its subcellular location is the cytoplasm. It catalyses the reaction tRNA(Tyr) + L-tyrosine + ATP = L-tyrosyl-tRNA(Tyr) + AMP + diphosphate + H(+). In terms of biological role, catalyzes the attachment of tyrosine to tRNA(Tyr) in a two-step reaction: tyrosine is first activated by ATP to form Tyr-AMP and then transferred to the acceptor end of tRNA(Tyr). This Rickettsia bellii (strain RML369-C) protein is Tyrosine--tRNA ligase.